The sequence spans 173 residues: Putative 2-oxo-4-hydroxy-4-carboxy-5-ureidoimidazoline decarboxylase (173 aa).

The active-site Proton donor is the His-67. Substrate is bound by residues Pro-68, 84 to 88 (SQREQ), and 119 to 123 (FVLAA). Residues 171–173 (AKL) carry the Microbody targeting signal motif.

Belongs to the OHCU decarboxylase family. As to expression, apparently not expressed.

It localises to the peroxisome. The enzyme catalyses 5-hydroxy-2-oxo-4-ureido-2,5-dihydro-1H-imidazole-5-carboxylate + H(+) = (S)-allantoin + CO2. Its pathway is purine metabolism; urate degradation; (S)-allantoin from urate: step 3/3. Catalyzes the stereoselective decarboxylation of 2-oxo-4-hydroxy-4-carboxy-5-ureidoimidazoline (OHCU) to (S)-allantoin. The chain is Putative 2-oxo-4-hydroxy-4-carboxy-5-ureidoimidazoline decarboxylase (URAD) from Homo sapiens (Human).